The primary structure comprises 502 residues: Glycerol kinase (502 aa).

Threonine 13 contacts ADP. Residues threonine 13, threonine 14, and serine 15 each contribute to the ATP site. Residue threonine 13 participates in sn-glycerol 3-phosphate binding. An ADP-binding site is contributed by arginine 17. Sn-glycerol 3-phosphate-binding residues include arginine 83, glutamate 84, tyrosine 136, and aspartate 246. Glycerol is bound by residues arginine 83, glutamate 84, tyrosine 136, aspartate 246, and glutamine 247. ADP is bound by residues threonine 268 and glycine 311. Positions 268, 311, 315, and 412 each coordinate ATP. Residues glycine 412 and asparagine 416 each contribute to the ADP site.

It belongs to the FGGY kinase family.

The enzyme catalyses glycerol + ATP = sn-glycerol 3-phosphate + ADP + H(+). Its pathway is polyol metabolism; glycerol degradation via glycerol kinase pathway; sn-glycerol 3-phosphate from glycerol: step 1/1. Its activity is regulated as follows. Inhibited by fructose 1,6-bisphosphate (FBP). Functionally, key enzyme in the regulation of glycerol uptake and metabolism. Catalyzes the phosphorylation of glycerol to yield sn-glycerol 3-phosphate. This is Glycerol kinase from Francisella tularensis subsp. tularensis (strain FSC 198).